We begin with the raw amino-acid sequence, 261 residues long: Cytochrome c oxidase subunit 3 (261 aa).

Residues 1–15 (MTHQTHAYHMVNPSP) are Mitochondrial matrix-facing. A helical membrane pass occupies residues 16-34 (WPLTGALSALLMTSGLIMW). Over 35 to 40 (FHFNST) the chain is Mitochondrial intermembrane. The chain crosses the membrane as a helical span at residues 41–66 (TLLMLGLTTNMLTMYQWWRDVVREST). The Mitochondrial matrix portion of the chain corresponds to 67 to 72 (FQGHHT). A helical transmembrane segment spans residues 73 to 105 (PNVQKGLRYGMILFIISEVLFFTGFFWAFYHSS). Residues 106 to 128 (LAPTPELGGCWPPTGINPLNPLE) lie on the Mitochondrial intermembrane side of the membrane. A helical transmembrane segment spans residues 129–152 (VPLLNTSVLLASGVSITWAHHSLM). Topologically, residues 153–155 (EGN) are mitochondrial matrix. The helical transmembrane segment at 156–183 (RNHMLQALFITIALGVYFTLLQASEYYE) threads the bilayer. The Mitochondrial intermembrane portion of the chain corresponds to 184–190 (APFTISD). Residues 191–223 (GVYGSTFFVATGFHGLHVIIGSTFLIVCFFRQL) traverse the membrane as a helical segment. Over 224–232 (KFHFTSNHH) the chain is Mitochondrial matrix. A helical membrane pass occupies residues 233-256 (FGFEAAAWYWHFVDVVWLFLYVSI). Residues 257-261 (YWWGS) lie on the Mitochondrial intermembrane side of the membrane.

Belongs to the cytochrome c oxidase subunit 3 family. Component of the cytochrome c oxidase (complex IV, CIV), a multisubunit enzyme composed of 14 subunits. The complex is composed of a catalytic core of 3 subunits MT-CO1, MT-CO2 and MT-CO3, encoded in the mitochondrial DNA, and 11 supernumerary subunits COX4I, COX5A, COX5B, COX6A, COX6B, COX6C, COX7A, COX7B, COX7C, COX8 and NDUFA4, which are encoded in the nuclear genome. The complex exists as a monomer or a dimer and forms supercomplexes (SCs) in the inner mitochondrial membrane with NADH-ubiquinone oxidoreductase (complex I, CI) and ubiquinol-cytochrome c oxidoreductase (cytochrome b-c1 complex, complex III, CIII), resulting in different assemblies (supercomplex SCI(1)III(2)IV(1) and megacomplex MCI(2)III(2)IV(2)).

The protein localises to the mitochondrion inner membrane. The enzyme catalyses 4 Fe(II)-[cytochrome c] + O2 + 8 H(+)(in) = 4 Fe(III)-[cytochrome c] + 2 H2O + 4 H(+)(out). In terms of biological role, component of the cytochrome c oxidase, the last enzyme in the mitochondrial electron transport chain which drives oxidative phosphorylation. The respiratory chain contains 3 multisubunit complexes succinate dehydrogenase (complex II, CII), ubiquinol-cytochrome c oxidoreductase (cytochrome b-c1 complex, complex III, CIII) and cytochrome c oxidase (complex IV, CIV), that cooperate to transfer electrons derived from NADH and succinate to molecular oxygen, creating an electrochemical gradient over the inner membrane that drives transmembrane transport and the ATP synthase. Cytochrome c oxidase is the component of the respiratory chain that catalyzes the reduction of oxygen to water. Electrons originating from reduced cytochrome c in the intermembrane space (IMS) are transferred via the dinuclear copper A center (CU(A)) of subunit 2 and heme A of subunit 1 to the active site in subunit 1, a binuclear center (BNC) formed by heme A3 and copper B (CU(B)). The BNC reduces molecular oxygen to 2 water molecules using 4 electrons from cytochrome c in the IMS and 4 protons from the mitochondrial matrix. The polypeptide is Cytochrome c oxidase subunit 3 (MT-CO3) (Gazella leptoceros (Sand gazelle)).